The following is a 147-amino-acid chain: Large ribosomal subunit protein uL13 (147 aa).

The protein belongs to the universal ribosomal protein uL13 family. As to quaternary structure, part of the 50S ribosomal subunit.

Its function is as follows. This protein is one of the early assembly proteins of the 50S ribosomal subunit, although it is not seen to bind rRNA by itself. It is important during the early stages of 50S assembly. This is Large ribosomal subunit protein uL13 from Ligilactobacillus salivarius (strain UCC118) (Lactobacillus salivarius).